Consider the following 86-residue polypeptide: Collagen alpha-1(XII) chain (86 aa).

Positions 1-12 (NQPGPPGPPGPP) are enriched in pro residues. Residues 1 to 86 (NQPGPPGPPG…PGRPGDSGIR (86 aa)) form a disordered region. 14 positions are modified to hydroxyproline: proline 6, proline 9, proline 12, proline 18, proline 24, proline 27, proline 30, proline 42, proline 51, proline 54, proline 65, proline 74, proline 77, and proline 80. A compositionally biased stretch (gly residues) spans 16–25 (GEPGPGGRPG). Residues 35–50 (PQGERGLPGEXGERGL) show a composition bias toward low complexity. The span at 57 to 71 (QGESRTGPPGSTGSR) shows a compositional bias: low complexity.

It belongs to the fibril-associated collagens with interrupted helices (FACIT) family. Trimer of identical chains each containing 190 kDa of non-triple-helical sequences. Post-translationally, the triple-helical tail is stabilized by disulfide bonds at each end. Prolines at the third position of the tripeptide repeating unit (G-X-Y) are hydroxylated in some or all of the chains.

The protein localises to the secreted. Its subcellular location is the extracellular space. The protein resides in the extracellular matrix. Its function is as follows. Type XII collagen interacts with type I collagen-containing fibrils, the COL1 domain could be associated with the surface of the fibrils, and the COL2 and NC3 domains may be localized in the perifibrillar matrix. The protein is Collagen alpha-1(XII) chain (COL12A1) of Bos taurus (Bovine).